We begin with the raw amino-acid sequence, 405 residues long: Arginine biosynthesis bifunctional protein ArgJ (405 aa).

Substrate is bound by residues T152, K178, T189, E276, N400, and T405. T189 serves as the catalytic Nucleophile.

This sequence belongs to the ArgJ family. Heterotetramer of two alpha and two beta chains.

Its subcellular location is the cytoplasm. The catalysed reaction is N(2)-acetyl-L-ornithine + L-glutamate = N-acetyl-L-glutamate + L-ornithine. The enzyme catalyses L-glutamate + acetyl-CoA = N-acetyl-L-glutamate + CoA + H(+). It participates in amino-acid biosynthesis; L-arginine biosynthesis; L-ornithine and N-acetyl-L-glutamate from L-glutamate and N(2)-acetyl-L-ornithine (cyclic): step 1/1. It functions in the pathway amino-acid biosynthesis; L-arginine biosynthesis; N(2)-acetyl-L-ornithine from L-glutamate: step 1/4. Its function is as follows. Catalyzes two activities which are involved in the cyclic version of arginine biosynthesis: the synthesis of N-acetylglutamate from glutamate and acetyl-CoA as the acetyl donor, and of ornithine by transacetylation between N(2)-acetylornithine and glutamate. In Pseudomonas fluorescens (strain ATCC BAA-477 / NRRL B-23932 / Pf-5), this protein is Arginine biosynthesis bifunctional protein ArgJ.